A 314-amino-acid chain; its full sequence is Ribosomal RNA small subunit methyltransferase H (314 aa).

S-adenosyl-L-methionine contacts are provided by residues 33 to 35 (GGH), aspartate 52, phenylalanine 84, aspartate 105, and glutamine 112.

It belongs to the methyltransferase superfamily. RsmH family.

The protein resides in the cytoplasm. The enzyme catalyses cytidine(1402) in 16S rRNA + S-adenosyl-L-methionine = N(4)-methylcytidine(1402) in 16S rRNA + S-adenosyl-L-homocysteine + H(+). In terms of biological role, specifically methylates the N4 position of cytidine in position 1402 (C1402) of 16S rRNA. The chain is Ribosomal RNA small subunit methyltransferase H from Lactobacillus delbrueckii subsp. bulgaricus (strain ATCC 11842 / DSM 20081 / BCRC 10696 / JCM 1002 / NBRC 13953 / NCIMB 11778 / NCTC 12712 / WDCM 00102 / Lb 14).